Here is a 324-residue protein sequence, read N- to C-terminus: Glyoxylate/hydroxypyruvate reductase B (324 aa).

Active-site residues include arginine 237 and glutamate 266. Histidine 285 (proton donor) is an active-site residue.

This sequence belongs to the D-isomer specific 2-hydroxyacid dehydrogenase family. GhrB subfamily. In terms of assembly, homodimer.

Its subcellular location is the cytoplasm. It catalyses the reaction glycolate + NADP(+) = glyoxylate + NADPH + H(+). The enzyme catalyses (R)-glycerate + NAD(+) = 3-hydroxypyruvate + NADH + H(+). The catalysed reaction is (R)-glycerate + NADP(+) = 3-hydroxypyruvate + NADPH + H(+). In terms of biological role, catalyzes the NADPH-dependent reduction of glyoxylate and hydroxypyruvate into glycolate and glycerate, respectively. The chain is Glyoxylate/hydroxypyruvate reductase B from Escherichia coli (strain ATCC 8739 / DSM 1576 / NBRC 3972 / NCIMB 8545 / WDCM 00012 / Crooks).